Reading from the N-terminus, the 314-residue chain is Torsin-2A (314 aa).

The N-terminal stretch at 1–19 is a signal peptide; the sequence is MAVRWWIIPMLLLVPGSSG. 86–93 serves as a coordination point for ATP; that stretch reads GWSGTGKT. N-linked (GlcNAc...) asparagine glycans are attached at residues asparagine 142 and asparagine 283.

The protein belongs to the ClpA/ClpB family. Torsin subfamily. As to quaternary structure, homohexamer.

Its subcellular location is the endoplasmic reticulum lumen. The sequence is that of Torsin-2A (tor2a) from Xenopus laevis (African clawed frog).